Reading from the N-terminus, the 392-residue chain is O-phospho-L-seryl-tRNA:Cys-tRNA synthase (392 aa).

Pyridoxal 5'-phosphate is bound by residues 85–86 (AR), Asn-190, and 213–215 (SGH). Lys-216 is modified (N6-(pyridoxal phosphate)lysine).

It belongs to the SepCysS family. Homodimer. Interacts with SepRS. Requires pyridoxal 5'-phosphate as cofactor.

It catalyses the reaction O-phospho-L-seryl-tRNA(Cys) + hydrogen sulfide + H(+) = L-cysteinyl-tRNA(Cys) + phosphate. Converts O-phospho-L-seryl-tRNA(Cys) (Sep-tRNA(Cys)) to L-cysteinyl-tRNA(Cys) (Cys-tRNA(Cys)). The sequence is that of O-phospho-L-seryl-tRNA:Cys-tRNA synthase from Methanoculleus marisnigri (strain ATCC 35101 / DSM 1498 / JR1).